We begin with the raw amino-acid sequence, 426 residues long: Glutamate-1-semialdehyde 2,1-aminomutase (426 aa).

Position 265 is an N6-(pyridoxal phosphate)lysine (lysine 265).

It belongs to the class-III pyridoxal-phosphate-dependent aminotransferase family. HemL subfamily. Homodimer. Pyridoxal 5'-phosphate serves as cofactor.

The protein localises to the cytoplasm. The enzyme catalyses (S)-4-amino-5-oxopentanoate = 5-aminolevulinate. The protein operates within porphyrin-containing compound metabolism; protoporphyrin-IX biosynthesis; 5-aminolevulinate from L-glutamyl-tRNA(Glu): step 2/2. This is Glutamate-1-semialdehyde 2,1-aminomutase from Halorhodospira halophila (strain DSM 244 / SL1) (Ectothiorhodospira halophila (strain DSM 244 / SL1)).